A 1194-amino-acid chain; its full sequence is Immunoglobulin superfamily member 3 (1194 aa).

The first 19 residues, 1-19, serve as a signal peptide directing secretion; sequence MKCFFPVLSCLAVLGVVSA. Ig-like C2-type domains lie at 20–138, 143–262, 276–386, 401–539, 545–661, 676–803, 813–945, and 949–1097; these read QRQV…AKMN, PDSL…WYAM, PTDK…KTVT, PIVV…VSIT, FAVT…WTRL, PVTK…EEVS, PDSR…TAVT, and PDAA…YRLT. The Extracellular portion of the chain corresponds to 20-1124; that stretch reads QRQVTVQEGP…LQSLICSNDA (1105 aa). 2 disulfide bridges follow: cysteine 42-cysteine 120 and cysteine 167-cysteine 246. N-linked (GlcNAc...) asparagine glycosylation occurs at asparagine 43. The EWI motif motif lies at 250–252; it reads EWI. Cysteine 302 and cysteine 376 are disulfide-bonded. N-linked (GlcNAc...) asparagine glycosylation is present at asparagine 418. 5 disulfide bridges follow: cysteine 432/cysteine 511, cysteine 566/cysteine 645, cysteine 701/cysteine 782, cysteine 838/cysteine 918, and cysteine 974/cysteine 1080. Asparagine 842 carries an N-linked (GlcNAc...) asparagine glycan. Residues 997 to 1030 form a disordered region; sequence GGGKRGSLGIDEQEEEEEEEDISQEEDSEDPTER. Positions 1007–1026 are enriched in acidic residues; it reads DEQEEEEEEEDISQEEDSED. N-linked (GlcNAc...) asparagine glycosylation occurs at asparagine 1077. Residues 1125 to 1145 form a helical membrane-spanning segment; it reads LFYFVFFYPFPIFGILIITIL. Residues 1146-1194 are Cytoplasmic-facing; sequence LVRFKSRNSSKNSEGKNGVPLLWIKEPHLNYSPTCLEPPVLSIHPGAID.

Expressed in the lacrimal duct and lacrimal gland.

Its subcellular location is the membrane. This Mus musculus (Mouse) protein is Immunoglobulin superfamily member 3 (Igsf3).